Here is a 216-residue protein sequence, read N- to C-terminus: DDB1- and CUL4-associated factor 16 (216 aa).

The disordered stretch occupies residues 1 to 42 (MGPRNPSPDHLSESESEEEENISYLNESSGEEWDSSEEEDSM). Residues 29–41 (SGEEWDSSEEEDS) are compositionally biased toward acidic residues. Position 61 is an N6-acetyllysine (K61).

As to quaternary structure, interacts with DDB1 and CUL4A.

The protein localises to the nucleus. Its pathway is protein modification; protein ubiquitination. Its function is as follows. Functions as a substrate recognition component for CUL4-DDB1 E3 ubiquitin-protein ligase complex, which mediates ubiquitination and proteasome-dependent degradation of nuclear proteins. This is DDB1- and CUL4-associated factor 16 from Homo sapiens (Human).